The following is a 172-amino-acid chain: Small ribosomal subunit protein uS5 (172 aa).

One can recognise an S5 DRBM domain in the interval 17–80; the sequence is LREKMISVNR…DEARRKMVKV (64 aa).

This sequence belongs to the universal ribosomal protein uS5 family. In terms of assembly, part of the 30S ribosomal subunit. Contacts proteins S4 and S8.

In terms of biological role, with S4 and S12 plays an important role in translational accuracy. Functionally, located at the back of the 30S subunit body where it stabilizes the conformation of the head with respect to the body. In Cupriavidus taiwanensis (strain DSM 17343 / BCRC 17206 / CCUG 44338 / CIP 107171 / LMG 19424 / R1) (Ralstonia taiwanensis (strain LMG 19424)), this protein is Small ribosomal subunit protein uS5.